The chain runs to 495 residues: Lysine--tRNA ligase (495 aa).

Mg(2+) contacts are provided by E406 and E413.

This sequence belongs to the class-II aminoacyl-tRNA synthetase family. Homodimer. Requires Mg(2+) as cofactor.

The protein localises to the cytoplasm. It catalyses the reaction tRNA(Lys) + L-lysine + ATP = L-lysyl-tRNA(Lys) + AMP + diphosphate. The protein is Lysine--tRNA ligase of Leptospira interrogans serogroup Icterohaemorrhagiae serovar copenhageni (strain Fiocruz L1-130).